Consider the following 110-residue polypeptide: Ribonuclease P protein component 4 (110 aa).

The Zn(2+) site is built by Cys-65, Cys-68, Cys-94, and Cys-97.

It belongs to the eukaryotic/archaeal RNase P protein component 4 family. In terms of assembly, consists of a catalytic RNA component and at least 4-5 protein subunits. Requires Zn(2+) as cofactor.

The protein localises to the cytoplasm. The catalysed reaction is Endonucleolytic cleavage of RNA, removing 5'-extranucleotides from tRNA precursor.. In terms of biological role, part of ribonuclease P, a protein complex that generates mature tRNA molecules by cleaving their 5'-ends. The sequence is that of Ribonuclease P protein component 4 from Methanococcus maripaludis (strain C5 / ATCC BAA-1333).